A 619-amino-acid chain; its full sequence is Pentatricopeptide repeat-containing protein At1g68980, mitochondrial (619 aa).

A mitochondrion-targeting transit peptide spans 1–100; it reads MLRKTLTLIS…RAFVSTTYVI (100 aa). 10 PPR repeats span residues 186-221, 222-256, 257-292, 295-329, 366-400, 401-435, 436-466, 472-506, 507-541, and 542-576; these read DLVA…GVKP, DELS…GFAS, RRIL…GEAS, SEET…ESMS, GIGV…GLQL, DVET…RVAD, LKRC…VMED, KSHD…QYEP, NNQT…KAKL, and EHAL…KIFV.

Belongs to the PPR family. P subfamily.

Its subcellular location is the mitochondrion. The protein is Pentatricopeptide repeat-containing protein At1g68980, mitochondrial of Arabidopsis thaliana (Mouse-ear cress).